Reading from the N-terminus, the 269-residue chain is Endo-1,3-1,4-beta-glycanase ExoK (269 aa).

The N-terminal stretch at 1–29 (MTIDRYRRFARLAFIATLPLAGLATAAAA) is a signal peptide. A GH16 domain is found at 40 to 252 (DDFDTLDTRV…RVAFTAAGDE (213 aa)). Residue Glu-138 is the Nucleophile of the active site. Residue Glu-142 is the Proton donor of the active site.

Belongs to the glycosyl hydrolase 16 family.

The protein resides in the secreted. Its pathway is glycan metabolism; exopolysaccharide biosynthesis. Functionally, cleaves high molecular weight succinoglycan to yield LMW succinoglycan. Dynamically regulates the molecular weight distribution of succinoglycan by cleaving nascent succinoglycan only during a limited period after its synthesis, perhaps before it undergoes a time-dependent change in its conformation or aggregation state. This chain is Endo-1,3-1,4-beta-glycanase ExoK (exoK), found in Rhizobium meliloti (strain 1021) (Ensifer meliloti).